We begin with the raw amino-acid sequence, 334 residues long: Holliday junction branch migration complex subunit RuvB (334 aa).

The large ATPase domain (RuvB-L) stretch occupies residues 4-186; the sequence is ADRLIAPENP…FGITQRLEYY (183 aa). ATP-binding positions include Ile25, Arg26, Gly67, Lys70, Thr71, Thr72, 133 to 135, Arg176, Tyr186, and Arg223; that span reads EDY. Position 71 (Thr71) interacts with Mg(2+). The small ATPAse domain (RuvB-S) stretch occupies residues 187–257; that stretch reads KVKDLQDIVQ…TADKALNMLD (71 aa). Positions 260 to 334 are head domain (RuvB-H); sequence AEGFDYMDRK…RAYLHFGIEK (75 aa). The DNA site is built by Arg315 and Arg320.

It belongs to the RuvB family. Homohexamer. Forms an RuvA(8)-RuvB(12)-Holliday junction (HJ) complex. HJ DNA is sandwiched between 2 RuvA tetramers; dsDNA enters through RuvA and exits via RuvB. An RuvB hexamer assembles on each DNA strand where it exits the tetramer. Each RuvB hexamer is contacted by two RuvA subunits (via domain III) on 2 adjacent RuvB subunits; this complex drives branch migration. In the full resolvosome a probable DNA-RuvA(4)-RuvB(12)-RuvC(2) complex forms which resolves the HJ.

The protein resides in the cytoplasm. It catalyses the reaction ATP + H2O = ADP + phosphate + H(+). The RuvA-RuvB-RuvC complex processes Holliday junction (HJ) DNA during genetic recombination and DNA repair, while the RuvA-RuvB complex plays an important role in the rescue of blocked DNA replication forks via replication fork reversal (RFR). RuvA specifically binds to HJ cruciform DNA, conferring on it an open structure. The RuvB hexamer acts as an ATP-dependent pump, pulling dsDNA into and through the RuvAB complex. RuvB forms 2 homohexamers on either side of HJ DNA bound by 1 or 2 RuvA tetramers; 4 subunits per hexamer contact DNA at a time. Coordinated motions by a converter formed by DNA-disengaged RuvB subunits stimulates ATP hydrolysis and nucleotide exchange. Immobilization of the converter enables RuvB to convert the ATP-contained energy into a lever motion, pulling 2 nucleotides of DNA out of the RuvA tetramer per ATP hydrolyzed, thus driving DNA branch migration. The RuvB motors rotate together with the DNA substrate, which together with the progressing nucleotide cycle form the mechanistic basis for DNA recombination by continuous HJ branch migration. Branch migration allows RuvC to scan DNA until it finds its consensus sequence, where it cleaves and resolves cruciform DNA. The protein is Holliday junction branch migration complex subunit RuvB of Vibrio campbellii (strain ATCC BAA-1116).